Reading from the N-terminus, the 860-residue chain is Transforming growth factor-beta receptor-associated protein 1 (860 aa).

Residues 24–297 form the CNH domain; that stretch reads HISIECVECC…HILQDFEGRV (274 aa). The stretch at 564 to 732 is one CHCR repeat; sequence RPLDEQQQTS…YLRAGPSAQD (169 aa).

It belongs to the TRAP1 family. In terms of assembly, interacts with TGFBR2 and ACVR2B; in the absence of ligand stimulation. Interacts with TGFBR1, ACVRL1, BMPR1A and ACVR1B; in the absence of ligand stimulation and to a less extent. Interacts with SMAD4; the interaction seems to be mutually exclusive with the interaction of SMAD4 and phosphorylated SMAD2. May interact with ALOX5. Interacts with RAB5C. Interacts with VPS8, VPS11 and VPS16. Component of the putative class C core vacuole/endosome tethering (CORVET) complex; the core of which composed of the class C Vps proteins VPS11, VPS16, VPS18 and VPS33A, is associated with VPS8 and TGFBRAP1.

It localises to the cytoplasm. The protein resides in the early endosome. In terms of biological role, plays a role in the TGF-beta/activin signaling pathway. It associates with inactive heteromeric TGF-beta and activin receptor complexes, mainly through the type II receptor, and is released upon activation of signaling. May recruit SMAD4 to the vicinity of the receptor complex and facilitate its interaction with receptor-regulated Smads, such as SMAD2. Functionally, plays a role in vesicle-mediated protein trafficking of the endocytic membrane transport pathway. Believed to act as a component of the putative CORVET endosomal tethering complexes which is proposed to be involved in the Rab5-to-Rab7 endosome conversion probably implicating MON1A/B, and via binding SNAREs and SNARE complexes to mediate tethering and docking events during SNARE-mediated membrane fusion. The CORVET complex is proposed to function as a Rab5 effector to mediate early endosome fusion probably in specific endosome subpopulations. Functions predominantly in APPL1-containing endosomes and in degradative but not recycling trafficking of endocytosed cargo. The polypeptide is Transforming growth factor-beta receptor-associated protein 1 (Tgfbrap1) (Mus musculus (Mouse)).